Reading from the N-terminus, the 404-residue chain is DNA gyrase subunit B (404 aa).

Residues Ser-321–Asp-404 enclose the Toprim domain. Residues Glu-327, Asp-400, and Asp-402 each coordinate Mg(2+).

It belongs to the type II topoisomerase GyrB family. As to quaternary structure, heterotetramer, composed of two GyrA and two GyrB chains. In the heterotetramer, GyrA contains the active site tyrosine that forms a transient covalent intermediate with DNA, while GyrB binds cofactors and catalyzes ATP hydrolysis. Requires Mg(2+) as cofactor. Mn(2+) is required as a cofactor. Ca(2+) serves as cofactor.

The protein localises to the cytoplasm. The catalysed reaction is ATP-dependent breakage, passage and rejoining of double-stranded DNA.. In terms of biological role, a type II topoisomerase that negatively supercoils closed circular double-stranded (ds) DNA in an ATP-dependent manner to modulate DNA topology and maintain chromosomes in an underwound state. Negative supercoiling favors strand separation, and DNA replication, transcription, recombination and repair, all of which involve strand separation. Also able to catalyze the interconversion of other topological isomers of dsDNA rings, including catenanes and knotted rings. Type II topoisomerases break and join 2 DNA strands simultaneously in an ATP-dependent manner. This chain is DNA gyrase subunit B (gyrB), found in Bacillus cereus.